Reading from the N-terminus, the 527-residue chain is Amine oxidase [flavin-containing] A (527 aa).

An N-acetylmethionine modification is found at methionine 1. Topologically, residues 1–497 (MASREKTSIE…HTFWERNLPS (497 aa)) are cytoplasmic. At serine 383 the chain carries Phosphoserine. Cysteine 406 is subject to S-8alpha-FAD cysteine. A helical; Anchor for type IV membrane protein transmembrane segment spans residues 498-518 (VTGLLKLIGFTTSVTALWIVA). Residues 519–527 (YKFRLLRRS) lie on the Mitochondrial intermembrane side of the membrane. The segment at 520–522 (KFR) is interaction with membrane phospholipid headgroups.

The protein belongs to the flavin monoamine oxidase family. As to quaternary structure, monomer, homo- or heterodimer (containing two subunits of similar size). Each subunit contains a covalently bound flavin. Enzymatically active as monomer. Requires FAD as cofactor.

The protein resides in the mitochondrion outer membrane. The catalysed reaction is a secondary aliphatic amine + O2 + H2O = a primary amine + an aldehyde + H2O2. It carries out the reaction a primary methyl amine + O2 + H2O = an aldehyde + H2O2 + NH4(+). The enzyme catalyses (R)-adrenaline + O2 + H2O = (R)-3,4-dihydroxymandelaldehyde + methylamine + H2O2. It catalyses the reaction dopamine + O2 + H2O = 3,4-dihydroxyphenylacetaldehyde + H2O2 + NH4(+). The catalysed reaction is tyramine + O2 + H2O = (4-hydroxyphenyl)acetaldehyde + H2O2 + NH4(+). It carries out the reaction (R)-noradrenaline + O2 + H2O = (R)-3,4-dihydroxymandelaldehyde + H2O2 + NH4(+). The enzyme catalyses serotonin + O2 + H2O = (5-hydroxyindol-3-yl)acetaldehyde + H2O2 + NH4(+). It catalyses the reaction kynuramine + O2 + H2O = 3-(2-aminophenyl)-3-oxopropanal + H2O2 + NH4(+). The catalysed reaction is tryptamine + O2 + H2O = indole-3-acetaldehyde + H2O2 + NH4(+). It carries out the reaction 2-phenylethylamine + O2 + H2O = 2-phenylacetaldehyde + H2O2 + NH4(+). In terms of biological role, catalyzes the oxidative deamination of primary and some secondary amine such as neurotransmitters, with concomitant reduction of oxygen to hydrogen peroxide and has important functions in the metabolism of neuroactive and vasoactive amines in the central nervous system and peripheral tissues. Preferentially oxidizes serotonin. Also catalyzes the oxidative deamination of kynuramine to 3-(2-aminophenyl)-3-oxopropanal that can spontaneously condense to 4-hydroxyquinoline. This Canis lupus familiaris (Dog) protein is Amine oxidase [flavin-containing] A.